The sequence spans 209 residues: MTLASQIATQLLDIKAVYLKPEDPFTWASGIKSPIYTDNRVTLSYPKTRDLIENGFVETIRAHFPEVEVIAGTATAGIPHGAIIADKMTLPFAYIRSKLKDHGAGNQIEGRVLKGQKMVIIEDLISTGGSVLDAAAAASREGADVLGVVAIFTYELPKASQNFKEAGIKLITLSNYTELIAVAKLQGYITNDGLHLLKKFKEDQVNWQQ.

5-phospho-alpha-D-ribose 1-diphosphate-binding positions include arginine 96, lysine 100, histidine 102, and 122–130 (EDLISTGGS). Serine 126 is an orotate binding site.

The protein belongs to the purine/pyrimidine phosphoribosyltransferase family. PyrE subfamily. Homodimer. Mg(2+) is required as a cofactor.

It catalyses the reaction orotidine 5'-phosphate + diphosphate = orotate + 5-phospho-alpha-D-ribose 1-diphosphate. Its pathway is pyrimidine metabolism; UMP biosynthesis via de novo pathway; UMP from orotate: step 1/2. In terms of biological role, catalyzes the transfer of a ribosyl phosphate group from 5-phosphoribose 1-diphosphate to orotate, leading to the formation of orotidine monophosphate (OMP). The sequence is that of Orotate phosphoribosyltransferase from Streptococcus pyogenes serotype M5 (strain Manfredo).